A 248-amino-acid chain; its full sequence is Granulin (248 aa).

It belongs to the polyhedrin family.

Component of the virus occlusion bodies, which are large proteinaceous structures, that protect the virus from the outside environment for extended periods until they are ingested by insect larvae. This is Granulin from Adoxophyes orana granulovirus (AoGV).